The chain runs to 162 residues: Nucleotide-binding protein Anae109_0095 (162 aa).

It belongs to the YajQ family.

In terms of biological role, nucleotide-binding protein. The polypeptide is Nucleotide-binding protein Anae109_0095 (Anaeromyxobacter sp. (strain Fw109-5)).